A 177-amino-acid chain; its full sequence is MSRVAKAPVTVPNGVAVTQNGRQVEVKGTKGTLSFNLHALVELKQEEGKLQLAPVKESKDAWMQAGTARAVLNNLVKGVSEGFERKLQLIGVGYKAAVKGTSINLNLGFSHPIDYSLPEGVTAETPTATEIILKSADKQLLGQVASEIRGYRPPEPYKGKGVRYSDEVVLRKEAKKK.

Belongs to the universal ribosomal protein uL6 family. As to quaternary structure, part of the 50S ribosomal subunit.

This protein binds to the 23S rRNA, and is important in its secondary structure. It is located near the subunit interface in the base of the L7/L12 stalk, and near the tRNA binding site of the peptidyltransferase center. The sequence is that of Large ribosomal subunit protein uL6 from Acinetobacter baylyi (strain ATCC 33305 / BD413 / ADP1).